Consider the following 259-residue polypeptide: MDRSAEFRKWKAQCLSKADLSRKGSVDEDVVELVQFLNMRDQFFTTSSCAGRILLLDRGINGFEVQKQNCCWLLVTHKLCVKDDVIVALKKANGDATLKFEPFVLHVQCRQLQDAQILHSMAIDSGFRNSGITVGKRGKTMLAVRSTHGLEVPLSHKGKLMVTEEYIDFLLNVANQKMEENKKRIERFYNCLQHALERETMTNLHPKIKEKNNSSYIHKKKRNPEKTRAQCITKESDEELENDDDDDLGINVTIFPEDY.

Ser-25 carries the phosphoserine modification.

This sequence belongs to the TYW3 family.

The catalysed reaction is 4-demethyl-7-[(3S)-3-amino-3-carboxypropyl]wyosine(37) in tRNA(Phe) + S-adenosyl-L-methionine = 7-[(3S)-3-amino-3-carboxypropyl]wyosine(37) in tRNA(Phe) + S-adenosyl-L-homocysteine + H(+). It functions in the pathway tRNA modification; wybutosine-tRNA(Phe) biosynthesis. Functionally, probable S-adenosyl-L-methionine-dependent methyltransferase that acts as a component of the wybutosine biosynthesis pathway. Wybutosine is a hyper modified guanosine with a tricyclic base found at the 3'-position adjacent to the anticodon of eukaryotic phenylalanine tRNA. The protein is tRNA wybutosine-synthesizing protein 3 homolog (TYW3) of Homo sapiens (Human).